The following is a 528-amino-acid chain: Lanosterol 14-alpha demethylase (528 aa).

Cys470 serves as a coordination point for heme.

The protein belongs to the cytochrome P450 family. It depends on heme as a cofactor.

The protein localises to the membrane. The catalysed reaction is a 14alpha-methyl steroid + 3 reduced [NADPH--hemoprotein reductase] + 3 O2 = a Delta(14) steroid + formate + 3 oxidized [NADPH--hemoprotein reductase] + 4 H2O + 4 H(+). The enzyme catalyses a 14alpha-methyl steroid + reduced [NADPH--hemoprotein reductase] + O2 = a 14alpha-hydroxymethyl steroid + oxidized [NADPH--hemoprotein reductase] + H2O + H(+). It catalyses the reaction a 14alpha-hydroxymethyl steroid + reduced [NADPH--hemoprotein reductase] + O2 = a 14alpha-formyl steroid + oxidized [NADPH--hemoprotein reductase] + 2 H2O + H(+). It carries out the reaction a 14alpha-formyl steroid + reduced [NADPH--hemoprotein reductase] + O2 = a Delta(14) steroid + formate + oxidized [NADPH--hemoprotein reductase] + H2O + 2 H(+). The catalysed reaction is lanosterol + 3 reduced [NADPH--hemoprotein reductase] + 3 O2 = 4,4-dimethyl-5alpha-cholesta-8,14,24-trien-3beta-ol + formate + 3 oxidized [NADPH--hemoprotein reductase] + 4 H2O + 4 H(+). The enzyme catalyses lanosterol + reduced [NADPH--hemoprotein reductase] + O2 = 32-hydroxylanosterol + oxidized [NADPH--hemoprotein reductase] + H2O + H(+). It catalyses the reaction 32-hydroxylanosterol + reduced [NADPH--hemoprotein reductase] + O2 = 32-oxolanosterol + oxidized [NADPH--hemoprotein reductase] + 2 H2O + H(+). It carries out the reaction 32-oxolanosterol + reduced [NADPH--hemoprotein reductase] + O2 = 4,4-dimethyl-5alpha-cholesta-8,14,24-trien-3beta-ol + formate + oxidized [NADPH--hemoprotein reductase] + H2O + 2 H(+). The catalysed reaction is eburicol + 3 reduced [NADPH--hemoprotein reductase] + 3 O2 = 14-demethyleburicol + formate + 3 oxidized [NADPH--hemoprotein reductase] + 4 H2O + 4 H(+). The enzyme catalyses eburicol + reduced [NADPH--hemoprotein reductase] + O2 = 32-hydroxyeburicol + oxidized [NADPH--hemoprotein reductase] + H2O + H(+). It catalyses the reaction 32-hydroxyeburicol + reduced [NADPH--hemoprotein reductase] + O2 = 32-oxoeburicol + oxidized [NADPH--hemoprotein reductase] + 2 H2O + H(+). It carries out the reaction 32-oxoeburicol + reduced [NADPH--hemoprotein reductase] + O2 = 14-demethyleburicol + formate + oxidized [NADPH--hemoprotein reductase] + H2O + 2 H(+). It participates in steroid biosynthesis; zymosterol biosynthesis; zymosterol from lanosterol: step 1/6. In terms of biological role, sterol 14alpha-demethylase that plays a critical role in the third module of ergosterol biosynthesis pathway, being ergosterol the major sterol component in fungal membranes that participates in a variety of functions. The third module or late pathway involves the ergosterol synthesis itself through consecutive reactions that mainly occur in the endoplasmic reticulum (ER) membrane. In filamentous fungi, during the initial step of this module, lanosterol (lanosta-8,24-dien-3beta-ol) can be metabolized to eburicol. Sterol 14alpha-demethylase catalyzes the three-step oxidative removal of the 14alpha-methyl group (C-32) of both these sterols in the form of formate, and converts eburicol and lanosterol to 14-demethyleburicol (4,4,24-trimethylergosta-8,14,24(28)-trienol) and 4,4-dimethyl-5alpha-cholesta-8,14,24-trien-3beta-ol, respectively, which are further metabolized by other enzymes in the pathway to ergosterol. Can also use substrates not intrinsic to fungi, such as 24,25-dihydrolanosterol (DHL), producing 4,4-dimethyl-8,14-cholestadien-3-beta-ol, but at lower rates than the endogenous substrates. This chain is Lanosterol 14-alpha demethylase (ERG11), found in Candida tropicalis (Yeast).